The primary structure comprises 344 residues: L-rhamnose-proton symporter (344 aa).

10 consecutive transmembrane segments (helical) span residues 4 to 24, 38 to 58, 68 to 88, 101 to 121, 137 to 157, 175 to 195, 214 to 234, 259 to 279, 290 to 310, and 323 to 343; these read AITM…CFYA, WSVG…ALLL, FSLS…IGNI, MGIG…TPII, TLLG…AGQL, LVLA…MNAA, LPSY…FCFI, VLLS…YAWG, ISWM…GLVL, and VLSL…IGMA.

This sequence belongs to the L-rhamnose transporter (TC 2.A.7.6) family.

It is found in the cell inner membrane. The enzyme catalyses L-rhamnopyranose(in) + H(+)(in) = L-rhamnopyranose(out) + H(+)(out). Its function is as follows. Uptake of L-rhamnose across the cytoplasmic membrane with the concomitant transport of protons into the cell (symport system). The polypeptide is L-rhamnose-proton symporter (Shigella sonnei (strain Ss046)).